The chain runs to 92 residues: Small ribosomal subunit protein uS17 (92 aa).

The protein belongs to the universal ribosomal protein uS17 family. As to quaternary structure, part of the 30S ribosomal subunit.

In terms of biological role, one of the primary rRNA binding proteins, it binds specifically to the 5'-end of 16S ribosomal RNA. This chain is Small ribosomal subunit protein uS17, found in Corynebacterium glutamicum (strain ATCC 13032 / DSM 20300 / JCM 1318 / BCRC 11384 / CCUG 27702 / LMG 3730 / NBRC 12168 / NCIMB 10025 / NRRL B-2784 / 534).